A 267-amino-acid chain; its full sequence is NLP effector protein 6 (267 aa).

The first 35 residues, 1-35 (MRTTSPYSHCSHVEMNAGAFVTMLLVALSVCVAAA), serve as a signal peptide directing secretion. N114 is a glycosylation site (N-linked (GlcNAc...) asparagine). Residues 117–127 (AIMYAWYFPKR) carry the Conserved undecapeptide motif motif. The Conserved heptapeptide motif signature appears at 134–140 (IQRHDWK). N-linked (GlcNAc...) asparagine glycosylation is present at N192.

It belongs to the Necrosis inducing protein (NPP1) family.

It localises to the secreted. Functionally, probable secreted effector that may act as a pathogen-associated molecular pattern (PAMP) recognized by the plant immune system. This is NLP effector protein 6 from Plasmopara viticola (Downy mildew of grapevine).